We begin with the raw amino-acid sequence, 271 residues long: MQAACWYVLLLLQPTVYLVTCANLTNGGKSELLKSGSSKSTLKHIWTESSKDLSISRLLSQTFRGKENDTDLDLRYDTPEPYSEQDLWDWLRNSTDLQEPRPRAKRRPIVKTGKFKKMFGWGDFHSNIKTVKLNLLITGKIVDHGNGTFSVYFRHNSTGQGNVSVSLVPPTKIVEFDLAQQTVIDAKDSKSFNCRIEYEKVDKATKNTLCNYDPSKTCYQEQTQSHVSWLCSKPFKVICIYISFYSTDYKLVQKVCPDYNYHSDTPYFPSG.

The first 21 residues, 1–21, serve as a signal peptide directing secretion; that stretch reads MQAACWYVLLLLQPTVYLVTC. The II stretch occupies residues 22-97; that stretch reads ANLTNGGKSE…WDWLRNSTDL (76 aa). Asn-23, Asn-68, Asn-93, Asn-146, Asn-156, and Asn-162 each carry an N-linked (GlcNAc...) asparagine glycan. An III region spans residues 98 to 176; it reads QEPRPRAKRR…LVPPTKIVEF (79 aa). Positions 177–185 are IV (linker domain); that stretch reads DLAQQTVID. Positions 186–271 are v (Cys-rich); it reads AKDSKSFNCR…HSDTPYFPSG (86 aa).

The protein belongs to the neurexophilin family. In terms of processing, may be proteolytically processed at the boundary between the N-terminal non-conserved and the central conserved domain in neuron-like cells. In terms of tissue distribution, brain, only in a scattered subpopulation of neurons that probably represent inhibitory interneurons.

It localises to the secreted. Its function is as follows. May be signaling molecules that resemble neuropeptides. Ligand for alpha-neurexins. This is Neurexophilin-1 (Nxph1) from Mus musculus (Mouse).